The following is a 53-amino-acid chain: Rubredoxin (53 aa).

The Rubredoxin-like domain occupies Met-1–Ile-52. Fe cation-binding residues include Cys-6, Cys-9, Cys-39, and Cys-42.

It belongs to the rubredoxin family. Requires Fe(3+) as cofactor.

In terms of biological role, rubredoxin is a small nonheme, iron protein lacking acid-labile sulfide. Its single Fe, chelated to 4 Cys, functions as an electron acceptor and may also stabilize the conformation of the molecule. This is Rubredoxin (rub) from Pyrococcus abyssi (strain GE5 / Orsay).